We begin with the raw amino-acid sequence, 104 residues long: DNA-directed RNA polymerase subunit omega (104 aa).

Belongs to the RNA polymerase subunit omega family. In terms of assembly, the RNAP catalytic core consists of 2 alpha, 1 beta, 1 beta' and 1 omega subunit. When a sigma factor is associated with the core the holoenzyme is formed, which can initiate transcription.

It carries out the reaction RNA(n) + a ribonucleoside 5'-triphosphate = RNA(n+1) + diphosphate. Its function is as follows. Promotes RNA polymerase assembly. Latches the N- and C-terminal regions of the beta' subunit thereby facilitating its interaction with the beta and alpha subunits. In Streptococcus thermophilus (strain CNRZ 1066), this protein is DNA-directed RNA polymerase subunit omega.